The chain runs to 353 residues: 2,4-diaminopentanoate dehydrogenase (353 aa).

The protein belongs to the DapB family. As to quaternary structure, homodimer.

The enzyme catalyses (2R,4S)-2,4-diaminopentanoate + NAD(+) + H2O = (2R)-2-amino-4-oxopentanoate + NH4(+) + NADH + H(+). It carries out the reaction (2R,4S)-2,4-diaminopentanoate + NADP(+) + H2O = (2R)-2-amino-4-oxopentanoate + NH4(+) + NADPH + H(+). Inhibited by p-chloromercuribenzoate, iodoacetate and N-ethylmaleimide. Its function is as follows. Involved in the ornithine fermentation pathway. Catalyzes the oxidative deamination of (2R,4S)-2,4-diaminopentanoate (DAP) to yield 2-amino-4-ketopentanoate (AKP). This chain is 2,4-diaminopentanoate dehydrogenase, found in Acetoanaerobium sticklandii (strain ATCC 12662 / DSM 519 / JCM 1433 / CCUG 9281 / NCIMB 10654 / HF) (Clostridium sticklandii).